The chain runs to 185 residues: Capsid protein (185 aa).

Residues 136-185 form a disordered region; sequence NAPILSTLPETTVVRRRDRGRSPRRRTPSPRRRRSQSPRRRRSQSRESQC. Residues 149–178 show a composition bias toward basic residues; it reads VRRRDRGRSPRRRTPSPRRRRSQSPRRRRS. 3 positions are modified to phosphoserine; by host: S157, S164, and S172. Residues 157–163 form a 1; half-length repeat; the sequence is SPRRRTP. The segment at 157 to 179 is 3 X 8 AA repeats of S-P-R-R-R-[PR]-S-Q; that stretch reads SPRRRTPSPRRRRSQSPRRRRSQ. A Bipartite nuclear localization signal motif is present at residues 160 to 177; sequence RRTPSPRRRRSQSPRRRR. A run of 2 repeats spans residues 164–171 and 172–179. The tract at residues 179–185 is RNA binding; it reads QSRESQC.

The protein belongs to the orthohepadnavirus core antigen family. In terms of assembly, homodimerizes, then multimerizes. Interacts with cytosol exposed regions of viral L glycoprotein present in the reticulum-to-Golgi compartment. Interacts with human FLNB. Phosphorylated form interacts with host importin alpha; this interaction depends on the exposure of the NLS, which itself depends upon genome maturation and/or phosphorylation of the capsid protein. Interacts with host NUP153. In terms of processing, phosphorylated by host SRPK1, SRPK2, and maybe protein kinase C or GAPDH. Phosphorylation is critical for pregenomic RNA packaging. Protein kinase C phosphorylation is stimulated by HBx protein and may play a role in transport of the viral genome to the nucleus at the late step during the viral replication cycle.

Its subcellular location is the virion. It is found in the host cytoplasm. In terms of biological role, self assembles to form an icosahedral capsid. Most capsids appear to be large particles with an icosahedral symmetry of T=4 and consist of 240 copies of capsid protein, though a fraction forms smaller T=3 particles consisting of 180 capsid proteins. Entering capsids are transported along microtubules to the nucleus. Phosphorylation of the capsid is thought to induce exposure of nuclear localization signal in the C-terminal portion of the capsid protein that allows binding to the nuclear pore complex via the importin (karyopherin-) alpha and beta. Capsids are imported in intact form through the nuclear pore into the nuclear basket, where it probably binds NUP153. Only capsids that contain the mature viral genome can release the viral DNA and capsid protein into the nucleoplasm. Immature capsids get stuck in the basket. Capsids encapsulate the pre-genomic RNA and the P protein. Pre-genomic RNA is reverse-transcribed into DNA while the capsid is still in the cytoplasm. The capsid can then either be directed to the nucleus, providing more genomes for transcription, or bud through the endoplasmic reticulum to provide new virions. This is Capsid protein from Homo sapiens (Human).